The chain runs to 88 residues: Putative membrane protein insertion efficiency factor (88 aa).

The protein belongs to the UPF0161 family.

Its subcellular location is the cell membrane. Functionally, could be involved in insertion of integral membrane proteins into the membrane. The polypeptide is Putative membrane protein insertion efficiency factor (yrcB) (Lactococcus lactis subsp. lactis (strain IL1403) (Streptococcus lactis)).